We begin with the raw amino-acid sequence, 438 residues long: Histidinol dehydrogenase (438 aa).

Positions 135, 193, and 216 each coordinate NAD(+). The substrate site is built by Ser243, Gln265, and His268. Zn(2+) contacts are provided by Gln265 and His268. Catalysis depends on proton acceptor residues Glu332 and His333. Substrate-binding residues include His333, Asp366, Glu420, and His425. Asp366 provides a ligand contact to Zn(2+). His425 contributes to the Zn(2+) binding site.

The protein belongs to the histidinol dehydrogenase family. Zn(2+) is required as a cofactor.

The enzyme catalyses L-histidinol + 2 NAD(+) + H2O = L-histidine + 2 NADH + 3 H(+). Its pathway is amino-acid biosynthesis; L-histidine biosynthesis; L-histidine from 5-phospho-alpha-D-ribose 1-diphosphate: step 9/9. Its function is as follows. Catalyzes the sequential NAD-dependent oxidations of L-histidinol to L-histidinaldehyde and then to L-histidine. The chain is Histidinol dehydrogenase from Shewanella oneidensis (strain ATCC 700550 / JCM 31522 / CIP 106686 / LMG 19005 / NCIMB 14063 / MR-1).